The following is a 247-amino-acid chain: Carboxy-S-adenosyl-L-methionine synthase (247 aa).

Residues Y39, G64–S66, D89–N90, D117–I118, N132, and R199 contribute to the S-adenosyl-L-methionine site.

Belongs to the class I-like SAM-binding methyltransferase superfamily. Cx-SAM synthase family. Homodimer.

It carries out the reaction prephenate + S-adenosyl-L-methionine = carboxy-S-adenosyl-L-methionine + 3-phenylpyruvate + H2O. Functionally, catalyzes the conversion of S-adenosyl-L-methionine (SAM) to carboxy-S-adenosyl-L-methionine (Cx-SAM). The polypeptide is Carboxy-S-adenosyl-L-methionine synthase (Escherichia coli O7:K1 (strain IAI39 / ExPEC)).